Consider the following 230-residue polypeptide: Ubiquitin carboxyl-terminal hydrolase isozyme L3 (230 aa).

Positions R5–A229 constitute a UCH catalytic domain. An interaction with ubiquitin region spans residues P8 to P13. C95 acts as the Nucleophile in catalysis. The residue at position 130 (S130) is a Phosphoserine. Residues A152–A159 form an interaction with ubiquitin. Crossover loop which restricts access of large ubiquitin adducts to the active site region. H169 functions as the Proton donor in the catalytic mechanism. The segment at E219–A224 is interaction with ubiquitin.

It belongs to the peptidase C12 family. In terms of assembly, preferentially binds diubiquitin; the interaction does not hydrolyze diubiquitin but, in vitro, inhibits the hydrolyzing activity on other substrates. Ubiquitously expressed, with highest levels in brain, liver, heart, thymus, kidney and testis. Highly expressed in the cauda epididymidis, in meiotic pachytene spermatocytes and post-meiotic spematids. In the retina, enriched in the photoreceptor inner segment.

It is found in the cytoplasm. It carries out the reaction Thiol-dependent hydrolysis of ester, thioester, amide, peptide and isopeptide bonds formed by the C-terminal Gly of ubiquitin (a 76-residue protein attached to proteins as an intracellular targeting signal).. Inhibited by monoubiquitin and diubiquitin. Functionally, deubiquitinating enzyme (DUB) that controls levels of cellular ubiquitin through processing of ubiquitin precursors and ubiquitinated proteins. Thiol protease that recognizes and hydrolyzes a peptide bond at the C-terminal glycine of either ubiquitin or NEDD8. Has a 10-fold preference for Arg and Lys at position P3'', and exhibits a preference towards 'Lys-48'-linked ubiquitin chains. Deubiquitinates ENAC in apical compartments, thereby regulating apical membrane recycling. Indirectly increases the phosphorylation of IGFIR, AKT and FOXO1 and promotes insulin-signaling and insulin-induced adipogenesis. Required for stress-response retinal, skeletal muscle and germ cell maintenance. May be involved in working memory. Can hydrolyze UBB(+1), a mutated form of ubiquitin which is not effectively degraded by the proteasome. In Mus musculus (Mouse), this protein is Ubiquitin carboxyl-terminal hydrolase isozyme L3 (Uchl3).